The sequence spans 287 residues: ADP-dependent (S)-NAD(P)H-hydrate dehydratase (287 aa).

The YjeF C-terminal domain maps to 7 to 283 (GEDDVRKFVP…ELLPSVMKPF (277 aa)). Residues alanine 42 and histidine 159 each coordinate (6S)-NADPHX. Residues 196-200 (KGPTD) and glycine 224 each bind AMP. Aspartate 225 lines the (6S)-NADPHX pocket.

This sequence belongs to the NnrD/CARKD family. As to quaternary structure, homotetramer. Mg(2+) serves as cofactor.

It carries out the reaction (6S)-NADHX + ADP = AMP + phosphate + NADH + H(+). The enzyme catalyses (6S)-NADPHX + ADP = AMP + phosphate + NADPH + H(+). Functionally, catalyzes the dehydration of the S-form of NAD(P)HX at the expense of ADP, which is converted to AMP. Together with NAD(P)HX epimerase, which catalyzes the epimerization of the S- and R-forms, the enzyme allows the repair of both epimers of NAD(P)HX, a damaged form of NAD(P)H that is a result of enzymatic or heat-dependent hydration. The polypeptide is ADP-dependent (S)-NAD(P)H-hydrate dehydratase (Cenarchaeum symbiosum (strain A)).